The chain runs to 152 residues: UPF0266 membrane protein KPK_1957 (152 aa).

3 helical membrane passes run Leu-6 to Met-26, Val-45 to His-65, and Thr-67 to Ile-87.

Belongs to the UPF0266 family.

It is found in the cell inner membrane. In Klebsiella pneumoniae (strain 342), this protein is UPF0266 membrane protein KPK_1957.